A 72-amino-acid chain; its full sequence is uncharacterized protein (72 aa).

Its subcellular location is the cytoplasm. The protein resides in the nucleus. This is an uncharacterized protein from Saccharomyces cerevisiae (strain ATCC 204508 / S288c) (Baker's yeast).